Reading from the N-terminus, the 280-residue chain is Eukaryotic translation initiation factor 3 subunit F-1 (280 aa).

Residues 8–138 (VRVHPVVLFQ…LRAYICIQLG (131 aa)) enclose the MPN domain.

The protein belongs to the eIF-3 subunit F family. Component of the eukaryotic translation initiation factor 3 (eIF-3) complex. The eIF-3 complex interacts with pix.

The protein localises to the cytoplasm. Component of the eukaryotic translation initiation factor 3 (eIF-3) complex, which is involved in protein synthesis of a specialized repertoire of mRNAs and, together with other initiation factors, stimulates binding of mRNA and methionyl-tRNAi to the 40S ribosome. The eIF-3 complex specifically targets and initiates translation of a subset of mRNAs involved in cell proliferation. This chain is Eukaryotic translation initiation factor 3 subunit F-1, found in Drosophila mojavensis (Fruit fly).